We begin with the raw amino-acid sequence, 369 residues long: Quinolinate synthase (369 aa).

Iminosuccinate is bound by residues His47 and Ser64. Cys111 is a [4Fe-4S] cluster binding site. Iminosuccinate-binding positions include 142–144 and Ser163; that span reads YVN. Cys231 lines the [4Fe-4S] cluster pocket. Residues 257 to 259 and Thr274 each bind iminosuccinate; that span reads HPE. Cys321 contributes to the [4Fe-4S] cluster binding site.

Belongs to the quinolinate synthase family. Type 3 subfamily. It depends on [4Fe-4S] cluster as a cofactor.

The protein localises to the cytoplasm. The catalysed reaction is iminosuccinate + dihydroxyacetone phosphate = quinolinate + phosphate + 2 H2O + H(+). It participates in cofactor biosynthesis; NAD(+) biosynthesis; quinolinate from iminoaspartate: step 1/1. Catalyzes the condensation of iminoaspartate with dihydroxyacetone phosphate to form quinolinate. The chain is Quinolinate synthase from Bacillus licheniformis (strain ATCC 14580 / DSM 13 / JCM 2505 / CCUG 7422 / NBRC 12200 / NCIMB 9375 / NCTC 10341 / NRRL NRS-1264 / Gibson 46).